The following is a 306-amino-acid chain: Probable histidinol-phosphatase (306 aa).

Belongs to the PHP hydrolase family. HisK subfamily.

The catalysed reaction is L-histidinol phosphate + H2O = L-histidinol + phosphate. It functions in the pathway amino-acid biosynthesis; L-histidine biosynthesis; L-histidine from 5-phospho-alpha-D-ribose 1-diphosphate: step 8/9. The chain is Probable histidinol-phosphatase from Schizosaccharomyces pombe (strain 972 / ATCC 24843) (Fission yeast).